Here is a 262-residue protein sequence, read N- to C-terminus: Pyridoxine 5'-phosphate synthase (262 aa).

Asn6 provides a ligand contact to 3-amino-2-oxopropyl phosphate. 8-9 serves as a coordination point for 1-deoxy-D-xylulose 5-phosphate; the sequence is DH. Position 17 (Arg17) interacts with 3-amino-2-oxopropyl phosphate. His43 serves as the catalytic Proton acceptor. Residues Arg45 and His50 each contribute to the 1-deoxy-D-xylulose 5-phosphate site. Glu70 (proton acceptor) is an active-site residue. Thr102 is a binding site for 1-deoxy-D-xylulose 5-phosphate. His215 (proton donor) is an active-site residue. Residues Gly216 and 237-238 contribute to the 3-amino-2-oxopropyl phosphate site; that span reads GH.

The protein belongs to the PNP synthase family. As to quaternary structure, homooctamer; tetramer of dimers.

It is found in the cytoplasm. It catalyses the reaction 3-amino-2-oxopropyl phosphate + 1-deoxy-D-xylulose 5-phosphate = pyridoxine 5'-phosphate + phosphate + 2 H2O + H(+). It participates in cofactor biosynthesis; pyridoxine 5'-phosphate biosynthesis; pyridoxine 5'-phosphate from D-erythrose 4-phosphate: step 5/5. In terms of biological role, catalyzes the complicated ring closure reaction between the two acyclic compounds 1-deoxy-D-xylulose-5-phosphate (DXP) and 3-amino-2-oxopropyl phosphate (1-amino-acetone-3-phosphate or AAP) to form pyridoxine 5'-phosphate (PNP) and inorganic phosphate. The polypeptide is Pyridoxine 5'-phosphate synthase (Helicobacter acinonychis (strain Sheeba)).